Here is a 516-residue protein sequence, read N- to C-terminus: Facilitated glucose transporter homolog (516 aa).

Positions 1 to 37 (MNAVVASQNKNDRSFSNMESESSSNVEKSEKENHHQS) are disordered. At 1–47 (MNAVVASQNKNDRSFSNMESESSSNVEKSEKENHHQSLPDENWTPFL) the chain is on the cytoplasmic side. The span at 14–26 (SFSNMESESSSNV) shows a compositional bias: low complexity. Over residues 27 to 37 (EKSEKENHHQS) the composition is skewed to basic and acidic residues. The chain crosses the membrane as a helical span at residues 48–68 (FFCISSIALASFQDGFQIGCI). Residues 69–101 (NAPGPLIIDWIKKCHFELFGEVLSQYQADFIWS) are Extracellular-facing. A helical transmembrane segment spans residues 102 to 122 (VAVSMFSVGGMFGSFCSGFLA). Residues 123 to 138 (DKFGRKSTLLYNNILA) lie on the Cytoplasmic side of the membrane. Residues 139 to 159 (LLAAVCLSTSKLFNFYPMIVF) traverse the membrane as a helical segment. At 160 to 161 (GR) the chain is on the extracellular side. The helical transmembrane segment at 162-182 (FLVGLNCGITSGLVPMFLTEL) threads the bilayer. The Cytoplasmic portion of the chain corresponds to 183–200 (APANLRGKCGSFHQLNIS). Residues 201–221 (VAIVLSQALGLPQIFGTQVGW) traverse the membrane as a helical segment. Residue Pro222 is a topological domain, extracellular. A helical membrane pass occupies residues 223-243 (YIFACVAIPTFLQLATIPFCV). The Cytoplasmic portion of the chain corresponds to 244–306 (ESPKYLISKL…SLFKGDNQWP (63 aa)). A helical membrane pass occupies residues 307 to 327 (MIVSILMMFSQQFSGISAVTF). At 328 to 344 (YSTLIFKRNGLSGNEPM) the chain is on the extracellular side. Residues 345-365 (YATVGFGCIKLIATFGCLFLI) traverse the membrane as a helical segment. Residues 366–376 (DHPKFGRKRLH) lie on the Cytoplasmic side of the membrane. A helical transmembrane segment spans residues 377–397 (IAGLSGMCISSILIVITLTLS). At 398-409 (NAGYHWASYMNV) the chain is on the extracellular side. The helical transmembrane segment at 410–430 (LFILSFVVTFAFGPGPIPWFF) threads the bilayer. Residues 431–444 (TSELFDSATRGRAA) are Cytoplasmic-facing. Residues 445 to 465 (AVSATSNWVANWMVGLTFLPI) form a helical membrane-spanning segment. Residues 466–471 (NNIIHQ) are Extracellular-facing. Residues 472–492 (YAFLMFTFFTFTFAIFTWKFV) form a helical membrane-spanning segment. The Cytoplasmic segment spans residues 493 to 516 (PETKGKSPSAIRKELAFMRKRICS).

It belongs to the major facilitator superfamily. Sugar transporter (TC 2.A.1.1) family. As to expression, expressed in seam cells from the early embryonic stage through the L2 stage (at protein level).

The protein localises to the cell membrane. Functionally, appears to have no transport activity for glucose. This Caenorhabditis elegans protein is Facilitated glucose transporter homolog.